Consider the following 895-residue polypeptide: MGDSGSRRCTLVSRLPIFRKSINRRHDSLPSSPSSSNTAGVHSSSPSSTNSSSGSTGKRRSIFRAPSISFHHKKGSEPKPEPTEQNLSISNGAQPSHSNMQKLSLEEHVKTRGRHSVGFSSSRSKKITRSLTEDFEREKEPSTNKNVFINCLSSGRSEGDDSGFTEEQSRRSIKQSTKKLLPKSFSSHYKFCKSVPQSQSTSLIQQPEFSLAIAQYQEQEAALGRPSPSCSVDVTERAGSSLQSPLLSADLTTAQTPSEFLALTEDSLSEADAFPKSGSTASHCDNFGHNDATSQPTSSLTAVSKTKMEFVGTAPCVMSPGRYRLEGRCSTELHSSPETPAGNRREVSLQSTELSVGNGSDPETHLPAHHQRGESPLAHAGEPALRTGSPRTLGSYDQHKALAERFKGVHPVSDSRVIPSSGDHVFNKTSYGYEASAAKVLASSLSPYREGRYIERRLRSSSEGTAGSSRMVLKPKDGHVEASSLRKHRTGSSSSKMNSLDVLNHLGSCELDEDDLMLDLEFLEEQNLQPPVCREDSCHSVMSCTAVLLSPVDPGKEVNMLEEPKCPEPSKQNLSLRITKDTDQEARCSHVSCMPNSPSADWPQQGVEENGGIDSLPFRLMLQECTAVKTLLLKMKRVLQESDVSPSSSTTSLPISPLTEEPLPFKDITRDECSMLRLQLKDRDELISQLQAELEKVQHLQKAFASRVDKSTQTELLGCDGLSLKRLEAVQGGRETTHRNRTMSQSHSTRDRKAIHTPTEDRFRYSTADQTSPYKNICQLPGLCLSNFLKDKELGGVMKHTRGNHEAVTSEMTQNSRTTMGQSFLKAAAKPEGLPMFSEKPKDPAALSRQHSTFTGRFGQPPRGPISLHTYSRKNVFLHHNLHTTEFQTLGQQDG.

Disordered stretches follow at residues 1 to 142 (MGDS…KEPS), 154 to 177 (SGRS…KQST), 332 to 394 (ELHS…RTLG), and 459 to 497 (RSSS…SSKM). Low complexity predominate over residues 43 to 56 (SSSPSSTNSSSGST). The segment covering 83–102 (TEQNLSISNGAQPSHSNMQK) has biased composition (polar residues). Over residues 131–142 (LTEDFEREKEPS) the composition is skewed to basic and acidic residues. Polar residues predominate over residues 348–358 (SLQSTELSVGN). A coiled-coil region spans residues 675–705 (MLRLQLKDRDELISQLQAELEKVQHLQKAFA). The disordered stretch occupies residues 731–753 (QGGRETTHRNRTMSQSHSTRDRK).

This sequence belongs to the CCSER family.

This Mus musculus (Mouse) protein is Serine-rich coiled-coil domain-containing protein 1 (Ccser1).